The primary structure comprises 111 residues: Iron-sulfur cluster assembly protein CyaY (111 aa).

Belongs to the frataxin family.

Functionally, involved in iron-sulfur (Fe-S) cluster assembly. May act as a regulator of Fe-S biogenesis. This is Iron-sulfur cluster assembly protein CyaY from Cupriavidus metallidurans (strain ATCC 43123 / DSM 2839 / NBRC 102507 / CH34) (Ralstonia metallidurans).